Here is a 233-residue protein sequence, read N- to C-terminus: Purine nucleoside phosphorylase DeoD-type (233 aa).

His-4 contributes to the a purine D-ribonucleoside binding site. Residues Gly-20, Arg-24, Arg-43, and 87–90 each bind phosphate; that span reads RVGT. A purine D-ribonucleoside is bound by residues 179–181 and 203–204; these read EME and SD. Asp-204 functions as the Proton donor in the catalytic mechanism.

The protein belongs to the PNP/UDP phosphorylase family. Homohexamer; trimer of homodimers.

The catalysed reaction is a purine D-ribonucleoside + phosphate = a purine nucleobase + alpha-D-ribose 1-phosphate. It catalyses the reaction a purine 2'-deoxy-D-ribonucleoside + phosphate = a purine nucleobase + 2-deoxy-alpha-D-ribose 1-phosphate. Its function is as follows. Catalyzes the reversible phosphorolytic breakdown of the N-glycosidic bond in the beta-(deoxy)ribonucleoside molecules, with the formation of the corresponding free purine bases and pentose-1-phosphate. This is Purine nucleoside phosphorylase DeoD-type from Clostridium novyi (strain NT).